The primary structure comprises 443 residues: Probable glycine dehydrogenase (decarboxylating) subunit 1 (443 aa).

This sequence belongs to the GcvP family. N-terminal subunit subfamily. The glycine cleavage system is composed of four proteins: P, T, L and H. In this organism, the P 'protein' is a heterodimer of two subunits.

The enzyme catalyses N(6)-[(R)-lipoyl]-L-lysyl-[glycine-cleavage complex H protein] + glycine + H(+) = N(6)-[(R)-S(8)-aminomethyldihydrolipoyl]-L-lysyl-[glycine-cleavage complex H protein] + CO2. Functionally, the glycine cleavage system catalyzes the degradation of glycine. The P protein binds the alpha-amino group of glycine through its pyridoxal phosphate cofactor; CO(2) is released and the remaining methylamine moiety is then transferred to the lipoamide cofactor of the H protein. This chain is Probable glycine dehydrogenase (decarboxylating) subunit 1, found in Chlorobium limicola (strain DSM 245 / NBRC 103803 / 6330).